The chain runs to 458 residues: MLKIIIPTIMLLPTALLSPKASLWTNTTTYSLLIATISLQWLNPTYFPHKNMTPWTGIDQISAPLLVLSCWLLPLMLLASQNHLQQEPLVRKRTFIVTLTTIQPFIILAFSATELTLFYISFEATLIPTLILITRWGNQPERLSAGIYLLFYTLISSLPLLVTILHLHTQIGTLHMPTLELTHPLLTHSWTGTLSGLALLMAFMVKAPLYGLHLWLPKAHVEAPIAGSMLLAALLLKLGGYGIMRVTLLMGPLTDRLSYPFLALALWGALMTSSICLRQTDLKSLIAYSSVSHMGLVIAASMIQTDWSFSGAMILMISHGLTSSMLFCLANTNYERTHSRILLLTRGLQPLLPLMSVWWLLANLTNMALPPTTNLMAELTIMIALFNWSTPTIILTGLATLLTASYTLFMLSMTQRGTLPTHLTSIHNSNTREHLLMTLHIFPMLLLMLKPELISGVI.

The next 12 helical transmembrane spans lie at 21-43 (ASLW…QWLN), 58-78 (IDQI…LMLL), 93-112 (RTFI…AFSA), 116-138 (TLFY…RWGN), 145-165 (AGIY…VTIL), 196-216 (GLAL…HLWL), 224-244 (PIAG…YGIM), 257-277 (LSYP…SICL), 285-305 (LIAY…MIQT), 309-329 (FSGA…LFCL), 341-361 (ILLL…WWLL), and 379-399 (LTIM…TGLA).

Belongs to the complex I subunit 4 family.

The protein resides in the mitochondrion membrane. It carries out the reaction a ubiquinone + NADH + 5 H(+)(in) = a ubiquinol + NAD(+) + 4 H(+)(out). In terms of biological role, core subunit of the mitochondrial membrane respiratory chain NADH dehydrogenase (Complex I) that is believed to belong to the minimal assembly required for catalysis. Complex I functions in the transfer of electrons from NADH to the respiratory chain. The immediate electron acceptor for the enzyme is believed to be ubiquinone. The polypeptide is NADH-ubiquinone oxidoreductase chain 4 (MT-ND4) (Struthio camelus (Common ostrich)).